The primary structure comprises 137 residues: Proofreading thioesterase EntH (137 aa).

The active-site Nucleophile or proton acceptor is the Glu63.

The protein belongs to the thioesterase PaaI family. In terms of assembly, homotetramer. Dimer of dimers. Interacts specifically with the aryl carrier protein (ArCP) domain of EntB.

The protein resides in the cytoplasm. The protein operates within siderophore biosynthesis; enterobactin biosynthesis. Required for optimal enterobactin synthesis. Acts as a proofreading enzyme that prevents EntB misacylation by hydrolyzing the thioester bound existing between EntB and wrongly charged molecules. This Escherichia coli O157:H7 (strain EC4115 / EHEC) protein is Proofreading thioesterase EntH.